The following is a 176-amino-acid chain: Large ribosomal subunit protein uL22z (176 aa).

Residues 154–163 show a composition bias toward basic and acidic residues; it reads KEEPVKKEPE. The interval 154 to 176 is disordered; the sequence is KEEPVKKEPETQLAAKSKKGASS.

Belongs to the universal ribosomal protein uL22 family.

The polypeptide is Large ribosomal subunit protein uL22z (RPL17A) (Arabidopsis thaliana (Mouse-ear cress)).